Here is an 823-residue protein sequence, read N- to C-terminus: Protein FAM83G (823 aa).

A2 is subject to N-acetylalanine. Residues 2–312 (AFSQVQCLDD…LYLMSHSVSL (311 aa)) form a DUF1669 region. S4 is modified (phosphoserine). Residues 75–108 (DPGSEDPRGTGPSQGPEDNGVGDGEEASGADGVP) are disordered. Residues S124, S127, and S356 each carry the phosphoserine modification. The interval 450 to 823 (RDTSQASAQH…AQAPRDRKDP (374 aa)) is disordered. Positions 452-465 (TSQASAQHQLWKQS) are enriched in polar residues. The segment covering 497–508 (DPEPLPPVPKPR) has biased composition (pro residues). Basic and acidic residues predominate over residues 529 to 543 (LPKEEAPQNGTDHRL). The span at 578 to 587 (GVEEEDDDDY) shows a compositional bias: acidic residues. Phosphoserine is present on residues S610, S614, S616, S650, and S666. 2 stretches are compositionally biased toward basic and acidic residues: residues 672-681 (RGREEADALK) and 809-823 (DSKR…RKDP).

Belongs to the FAM83 family. As to quaternary structure, interacts with SMAD1 (via MH2 domain); in a SMAD4-independent manner. Directly interacts (via DUF1669) with casein kinase isoforms CSNK1A1 and CSNK1A1L. In terms of processing, phosphorylated in vitro by CSNK1A1. Post-translationally, BMP signaling induces the phosphorylation by BMPR1A at Ser-610, Ser-614 and Ser-616. Phosphorylation at Ser-610 is necessary for the activation of SMAD4-independent BMP target genes such as NEDD9 and ASNS.

The protein resides in the cytoplasm. Its subcellular location is the cytosol. It localises to the nucleus. Substrate for type I BMP receptor kinase involved in regulation of some target genes of the BMP signaling pathway. Also regulates the expression of several non-BMP target genes, suggesting a role in other signaling pathways. The chain is Protein FAM83G (FAM83G) from Homo sapiens (Human).